Reading from the N-terminus, the 212-residue chain is Ribonuclease HII (212 aa).

Residues 1–206 form the RNase H type-2 domain; the sequence is MICGVDEAGK…VKNLLHQKNQ (206 aa). Residues Asp6, Glu7, and Asp101 each contribute to the a divalent metal cation site.

It belongs to the RNase HII family. Requires Mn(2+) as cofactor. Mg(2+) is required as a cofactor.

Its subcellular location is the cytoplasm. The enzyme catalyses Endonucleolytic cleavage to 5'-phosphomonoester.. Functionally, endonuclease that specifically degrades the RNA of RNA-DNA hybrids. The sequence is that of Ribonuclease HII from Methanospirillum hungatei JF-1 (strain ATCC 27890 / DSM 864 / NBRC 100397 / JF-1).